A 94-amino-acid polypeptide reads, in one-letter code: Dynein light chain, cytoplasmic (94 aa).

Belongs to the dynein light chain family. As to quaternary structure, homodimer. Cytoplasmic dynein consists of two catalytic heavy chains (HCs) and a number of non-catalytic subunits which present intermediate chains (ICs), light intermediate chains (LICs) and light chains (LCs). Component of the nuclear pore complex (NPC). The nuclear pore complex constitutes the exclusive means of nucleocytoplasmic transport. NPCs allow the passive diffusion of ions and small molecules and the active, nuclear transport receptor-mediated bidirectional transport of macromolecules such as proteins, RNAs, ribonucleoparticles (RNPs), and ribosomal subunits across the nuclear envelope. Due to its 8-fold rotational symmetry, all subunits are present with 8 copies or multiples thereof.

It localises to the cytoplasm. The protein resides in the cytoskeleton. Its subcellular location is the nucleus. It is found in the nuclear pore complex. Its function is as follows. Acts as one of several non-catalytic accessory components of the cytoplasmic dynein complex that are thought to be involved in linking dynein to cargos and to adapter proteins that regulate dynein function. Cytoplasmic dynein 1 acts as a motor for the intracellular retrograde motility of vesicles and organelles along microtubules. May play a role in changing or maintaining the spatial distribution of cytoskeletal structures. Also a component of the nuclear pore complex. The sequence is that of Dynein light chain, cytoplasmic (nudG) from Emericella nidulans (strain FGSC A4 / ATCC 38163 / CBS 112.46 / NRRL 194 / M139) (Aspergillus nidulans).